Consider the following 349-residue polypeptide: sn-glycerol-3-phosphate import ATP-binding protein UgpC (349 aa).

Positions 4-235 (VTLTAVRKVY…PASTFVASFM (232 aa)) constitute an ABC transporter domain. 37–44 (GPSGCGKS) contributes to the ATP binding site.

This sequence belongs to the ABC transporter superfamily. sn-glycerol-3-phosphate importer (TC 3.A.1.1.3) family. The complex is composed of two ATP-binding proteins (UgpC), two transmembrane proteins (UgpA and UgpE) and a solute-binding protein (UgpB).

Its subcellular location is the cell inner membrane. It catalyses the reaction sn-glycerol 3-phosphate(out) + ATP + H2O = sn-glycerol 3-phosphate(in) + ADP + phosphate + H(+). Functionally, part of the ABC transporter complex UgpBAEC involved in sn-glycerol-3-phosphate (G3P) import. Responsible for energy coupling to the transport system. The sequence is that of sn-glycerol-3-phosphate import ATP-binding protein UgpC from Jannaschia sp. (strain CCS1).